A 149-amino-acid chain; its full sequence is Arginine repressor (149 aa).

It belongs to the ArgR family.

The protein localises to the cytoplasm. The protein operates within amino-acid biosynthesis; L-arginine biosynthesis [regulation]. Regulates arginine biosynthesis genes. The protein is Arginine repressor of Bacillus mycoides (strain KBAB4) (Bacillus weihenstephanensis).